Here is a 297-residue protein sequence, read N- to C-terminus: ER membrane protein complex subunit 2 (297 aa).

Ala-2 carries the post-translational modification N-acetylalanine. TPR repeat units follow at residues 87–120 (HRVK…DPTN), 155–188 (QEAW…NPYN), and 192–225 (CQQY…NNRN). Lys-255 carries the N6-acetyllysine modification.

It belongs to the EMC2 family. In terms of assembly, component of the ER membrane protein complex (EMC).

The protein resides in the endoplasmic reticulum membrane. Functionally, part of the endoplasmic reticulum membrane protein complex (EMC) that enables the energy-independent insertion into endoplasmic reticulum membranes of newly synthesized membrane proteins. Preferentially accommodates proteins with transmembrane domains that are weakly hydrophobic or contain destabilizing features such as charged and aromatic residues. Involved in the cotranslational insertion of multi-pass membrane proteins in which stop-transfer membrane-anchor sequences become ER membrane spanning helices. It is also required for the post-translational insertion of tail-anchored/TA proteins in endoplasmic reticulum membranes. By mediating the proper cotranslational insertion of N-terminal transmembrane domains in an N-exo topology, with translocated N-terminus in the lumen of the ER, controls the topology of multi-pass membrane proteins like the G protein-coupled receptors. By regulating the insertion of various proteins in membranes, it is indirectly involved in many cellular processes. The sequence is that of ER membrane protein complex subunit 2 from Bos taurus (Bovine).